Consider the following 362-residue polypeptide: Methylthioribose-1-phosphate isomerase (362 aa).

The active-site Proton donor is the Asp252.

Belongs to the eIF-2B alpha/beta/delta subunits family. MtnA subfamily.

The protein resides in the cytoplasm. The protein localises to the nucleus. It carries out the reaction 5-(methylsulfanyl)-alpha-D-ribose 1-phosphate = 5-(methylsulfanyl)-D-ribulose 1-phosphate. The protein operates within amino-acid biosynthesis; L-methionine biosynthesis via salvage pathway; L-methionine from S-methyl-5-thio-alpha-D-ribose 1-phosphate: step 1/6. Catalyzes the interconversion of methylthioribose-1-phosphate (MTR-1-P) into methylthioribulose-1-phosphate (MTRu-1-P). The chain is Methylthioribose-1-phosphate isomerase from Drosophila mojavensis (Fruit fly).